Reading from the N-terminus, the 315-residue chain is tRNA dimethylallyltransferase (315 aa).

Residue 11 to 18 (GPTASGKS) coordinates ATP. 13–18 (TASGKS) is a substrate binding site. Interaction with substrate tRNA regions lie at residues 36–39 (DSMQ) and 160–164 (QRLIR).

It belongs to the IPP transferase family. In terms of assembly, monomer. Requires Mg(2+) as cofactor.

The enzyme catalyses adenosine(37) in tRNA + dimethylallyl diphosphate = N(6)-dimethylallyladenosine(37) in tRNA + diphosphate. Its function is as follows. Catalyzes the transfer of a dimethylallyl group onto the adenine at position 37 in tRNAs that read codons beginning with uridine, leading to the formation of N6-(dimethylallyl)adenosine (i(6)A). In Rickettsia bellii (strain OSU 85-389), this protein is tRNA dimethylallyltransferase.